The primary structure comprises 437 residues: Trigger factor (437 aa).

The PPIase FKBP-type domain maps to Gly164–Pro249.

Belongs to the FKBP-type PPIase family. Tig subfamily.

It is found in the cytoplasm. It catalyses the reaction [protein]-peptidylproline (omega=180) = [protein]-peptidylproline (omega=0). Its function is as follows. Involved in protein export. Acts as a chaperone by maintaining the newly synthesized protein in an open conformation. Functions as a peptidyl-prolyl cis-trans isomerase. This is Trigger factor from Azoarcus sp. (strain BH72).